The following is a 430-amino-acid chain: Serine--tRNA ligase (430 aa).

Residue 237–239 (TAE) coordinates L-serine. Residue 268 to 270 (RSE) participates in ATP binding. E291 provides a ligand contact to L-serine. ATP is bound at residue 355–358 (EISS). S391 lines the L-serine pocket.

This sequence belongs to the class-II aminoacyl-tRNA synthetase family. Type-1 seryl-tRNA synthetase subfamily. Homodimer. The tRNA molecule binds across the dimer.

Its subcellular location is the cytoplasm. It catalyses the reaction tRNA(Ser) + L-serine + ATP = L-seryl-tRNA(Ser) + AMP + diphosphate + H(+). The enzyme catalyses tRNA(Sec) + L-serine + ATP = L-seryl-tRNA(Sec) + AMP + diphosphate + H(+). Its pathway is aminoacyl-tRNA biosynthesis; selenocysteinyl-tRNA(Sec) biosynthesis; L-seryl-tRNA(Sec) from L-serine and tRNA(Sec): step 1/1. Its function is as follows. Catalyzes the attachment of serine to tRNA(Ser). Is also able to aminoacylate tRNA(Sec) with serine, to form the misacylated tRNA L-seryl-tRNA(Sec), which will be further converted into selenocysteinyl-tRNA(Sec). This is Serine--tRNA ligase from Citrobacter koseri (strain ATCC BAA-895 / CDC 4225-83 / SGSC4696).